We begin with the raw amino-acid sequence, 371 residues long: MKGISKVLSASIVLMKLKGVYSTTVLCGDSTQGLQGTTQPSYVLVPSAPETIANCGYSPQNMYVPSTPTTMPSTVPGTTGESETPTSPTSSPTEDVGTCKIAVVKHCDAPGTSSTPCEPEQTLAPSQPVAATIATPLVVASVQTPQAAVTILTPKAVSAQPATIISPFNQAPGYYNSAIPGQILTGNVLSPSASSCQVVPGTTGSSTPQQLPGAVSSGTIPCQIVQGTQSSGNTPGQQFLPGIVPVGSLQPDQATSGTPTPSVSQSQSGQQCCCTPPITNPVMPTPMGISSNGYPSSTAYAPTLGQLGPCIDTQKSTSSCEPKEKPVAQYGMEACAAPTPTAVLGNAEYLLSPGMYNSLNSPCNACCQQQC.

The N-terminal stretch at 1–22 is a signal peptide; sequence MKGISKVLSASIVLMKLKGVYS. Low complexity-rich tracts occupy residues 65–94 and 255–270; these read PSTP…SPTE and TSGT…QSGQ. Disordered regions lie at residues 65–95 and 229–270; these read PSTP…PTED and QSSG…QSGQ.

Glycosylated.

The protein resides in the spore polar tube. In terms of biological role, involved with PTP2 and PTP3 in formation of a polar tube through which the infectious agent is passed on to the host cell. This Encephalitozoon intestinalis (Microsporidian parasite) protein is Polar tube protein 1 (PTP1).